The chain runs to 254 residues: 3-deoxy-manno-octulosonate cytidylyltransferase (254 aa).

Belongs to the KdsB family.

It is found in the cytoplasm. The catalysed reaction is 3-deoxy-alpha-D-manno-oct-2-ulosonate + CTP = CMP-3-deoxy-beta-D-manno-octulosonate + diphosphate. The protein operates within nucleotide-sugar biosynthesis; CMP-3-deoxy-D-manno-octulosonate biosynthesis; CMP-3-deoxy-D-manno-octulosonate from 3-deoxy-D-manno-octulosonate and CTP: step 1/1. It participates in bacterial outer membrane biogenesis; lipopolysaccharide biosynthesis. Activates KDO (a required 8-carbon sugar) for incorporation into bacterial lipopolysaccharide in Gram-negative bacteria. This chain is 3-deoxy-manno-octulosonate cytidylyltransferase, found in Pseudomonas fluorescens (strain ATCC BAA-477 / NRRL B-23932 / Pf-5).